The sequence spans 306 residues: Grixazone synthase (306 aa).

Cu(2+) is bound by residues His-39, His-58, His-67, His-222, His-226, and His-248.

Belongs to the tyrosinase family. Requires Cu(2+) as cofactor.

It carries out the reaction 2 3-amino-4-hydroxybenzoate + N-acetyl-L-cysteine + 2 O2 + H(+) = grixazone B + CO2 + 4 H2O. The catalysed reaction is 2 3-amino-4-hydroxybenzaldehyde + N-acetyl-L-cysteine + 2 O2 = grixazone A + formate + 3 H2O + H(+). The enzyme catalyses 4 2-aminophenol + 3 O2 = 2 2-aminophenoxazin-3-one + 6 H2O. Its activity is regulated as follows. Inhibited by 3-amino-4-hydroxybenzensulfonic acid, 4-hydroxy-3-nitrobenzaldehyde, L-tyrosine, p-hydroxybenzaldehyde. Activated by the copper chaperone GriE. Its function is as follows. Involved in the biosynthesis of the parasiticide antibiotic grixazone. Catalyzes the oxidation of 3-amino-4-hydroxybenzoate (3,4-AHBOA) to yield the corresponding quinone imine which is then non-enzymatically conjugated with the thiol group of N-acetylcysteine. The resultant compound is oxidized to its quinone imine enzymatically and is then dimerized non-enzymatically with another quinone imine oxidized by GriF to yield grixazone B. 3-amino-4-hydroxybenzaldehyde (3,4-AHBAL) can also be used as substrate to yield grixazone A. In the grixazone biosynthetic pathway, it can also function as an o-aminophenol oxidase that catalyzes the formation of the phenoxazinone chromophore from alpha-aminophenol. It can also use 2-amino-4-methylphenol, and to a lesser extent, 3,4-dihydroxybenzaldehyde, catechol and 3,4-dihydroxy-L-phenylalanine (L-DOPA) as substrates. In contrast to tyrosinases, it does not display monophenolase activity. The chain is Grixazone synthase from Streptomyces griseus subsp. griseus (strain JCM 4626 / CBS 651.72 / NBRC 13350 / KCC S-0626 / ISP 5235).